The chain runs to 252 residues: uncharacterized protein (252 aa).

Residue 16–40 participates in NADP(+) binding; sequence LVTGASDGIGREAAMTYARYGATVI. S152 contributes to the substrate binding site. Y165 functions as the Proton acceptor in the catalytic mechanism.

The protein belongs to the short-chain dehydrogenases/reductases (SDR) family.

This is an uncharacterized protein from Escherichia coli (strain K12).